Reading from the N-terminus, the 146-residue chain is Large ribosomal subunit protein uL15 (146 aa).

Positions Met-1–Gln-54 are disordered. Gly residues-rich tracts occupy residues Arg-21–Ala-31 and Ser-42–Gly-52.

This sequence belongs to the universal ribosomal protein uL15 family. As to quaternary structure, part of the 50S ribosomal subunit.

Functionally, binds to the 23S rRNA. This Clostridium acetobutylicum (strain ATCC 824 / DSM 792 / JCM 1419 / IAM 19013 / LMG 5710 / NBRC 13948 / NRRL B-527 / VKM B-1787 / 2291 / W) protein is Large ribosomal subunit protein uL15.